A 209-amino-acid chain; its full sequence is Mitotic spindle checkpoint protein MAD2 (209 aa).

Residues 15–198 (HGSAAIVSEF…TKIHKVDTLV (184 aa)) form the HORMA domain.

It belongs to the MAD2 family. As to quaternary structure, part of the mitotic checkpoint complex (MCC); interacts with MAD1, CDC20-1, CDC20-2 and CDC20-5. Interacts with BUBR1 at chromocenters and with BUB3.1. Interacts with EIF4B3. In terms of tissue distribution, expressed in actively dividing tissues, early in organ development, in young leaves, lateral root primordia and root meristems.

Its subcellular location is the nucleus. The protein localises to the nucleus envelope. It is found in the chromosome. It localises to the centromere. The protein resides in the kinetochore. Its subcellular location is the cytoplasm. The protein localises to the cytoskeleton. It is found in the spindle. Functionally, required for the execution of the mitotic checkpoint which monitors the process of kinetochore-spindle attachment and delays the onset of anaphase when this process is not complete. It inhibits the activity of the anaphase promoting complex by sequestering CDC20 until all chromosomes are aligned at the metaphase plate. The polypeptide is Mitotic spindle checkpoint protein MAD2 (Arabidopsis thaliana (Mouse-ear cress)).